The following is a 708-amino-acid chain: Probable inactive lysine-specific demethylase JMJ19 (708 aa).

The disordered stretch occupies residues 35-59 (VPRDKESPRSVSRQEQTTGFGTDDK). Residues 43–54 (RSVSRQEQTTGF) are compositionally biased toward polar residues. Positions 108 to 149 (APVFNPTEEEFRDTLSYISSLRDRAEPYGICCVVPPPSWKPP) constitute a JmjN domain. Positions 293–454 (SSGWNLNSTA…HGDIAVQVNQ (162 aa)) constitute a JmjC domain. Positions 544, 547, 558, 560, 567, 570, 575, and 577 each coordinate Zn(2+). The RING-type; degenerate zinc finger occupies 544 to 581 (CCVCLGDLYLSAVNCSCSANRYSCLNHMRKLCACPCDR). The short motif at 646–653 (TRKDVAAG) is the Nuclear localization signal element. The segment covering 678 to 694 (AKETLESCSKKSNRPCD) has biased composition (basic and acidic residues). Residues 678–708 (AKETLESCSKKSNRPCDNDSSEANAPKKQKQ) are disordered.

Belongs to the JARID1 histone demethylase family. As to expression, expressed in inflorescences, roots, siliques, leaves and stems.

It is found in the nucleus. This chain is Probable inactive lysine-specific demethylase JMJ19, found in Arabidopsis thaliana (Mouse-ear cress).